A 393-amino-acid chain; its full sequence is Probable xylan O-acetyltransferase 11 (393 aa).

At 1–9 the chain is on the cytoplasmic side; that stretch reads MHQPAIMQR. Residues 10-26 traverse the membrane as a helical; Signal-anchor for type II membrane protein segment; the sequence is ALAVVALLAAAAAIAAA. The Lumenal portion of the chain corresponds to 27–393; sequence QGESPELLPF…LFFPARDEAI (367 aa). Intrachain disulfides connect Cys45/Cys96, Cys67/Cys132, Cys76/Cys368, and Cys283/Cys364. N-linked (GlcNAc...) asparagine glycosylation is present at Asn102. Residues 119-121 carry the GDS motif motif; it reads GDS. Ser121 (nucleophile) is an active-site residue. N-linked (GlcNAc...) asparagine glycosylation is present at Asn325. The active-site Proton donor is the Asp363. Positions 363 to 366 match the DXXH motif motif; sequence DCTH. His366 acts as the Proton acceptor in catalysis.

This sequence belongs to the PC-esterase family. TBL subfamily. As to expression, expressed in roots, leaves and stems.

Its subcellular location is the golgi apparatus membrane. Probable xylan acetyltransferase required for 2-O- and 3-O-monoacetylation of xylosyl residues in xylan. Possesses extremely low activity in vitro. The sequence is that of Probable xylan O-acetyltransferase 11 from Oryza sativa subsp. japonica (Rice).